The following is a 189-amino-acid chain: Peptidyl-tRNA hydrolase (189 aa).

Tyr14 is a tRNA binding site. The Proton acceptor role is filled by His19. TRNA contacts are provided by Tyr64, Asn66, and Asn112.

The protein belongs to the PTH family. As to quaternary structure, monomer.

It localises to the cytoplasm. It carries out the reaction an N-acyl-L-alpha-aminoacyl-tRNA + H2O = an N-acyl-L-amino acid + a tRNA + H(+). Its function is as follows. Hydrolyzes ribosome-free peptidyl-tRNAs (with 1 or more amino acids incorporated), which drop off the ribosome during protein synthesis, or as a result of ribosome stalling. In terms of biological role, catalyzes the release of premature peptidyl moieties from peptidyl-tRNA molecules trapped in stalled 50S ribosomal subunits, and thus maintains levels of free tRNAs and 50S ribosomes. This chain is Peptidyl-tRNA hydrolase, found in Clostridium botulinum (strain 657 / Type Ba4).